Consider the following 565-residue polypeptide: Maturase K (565 aa).

The protein belongs to the intron maturase 2 family. MatK subfamily.

The protein resides in the plastid. It is found in the chloroplast. In terms of biological role, usually encoded in the trnK tRNA gene intron. Probably assists in splicing its own and other chloroplast group II introns. In Staurastrum punctulatum (Green alga), this protein is Maturase K.